Here is a 260-residue protein sequence, read N- to C-terminus: Tryptophan synthase alpha chain (260 aa).

Residues E52 and D63 each act as proton acceptor in the active site.

This sequence belongs to the TrpA family. In terms of assembly, tetramer of two alpha and two beta chains.

The catalysed reaction is (1S,2R)-1-C-(indol-3-yl)glycerol 3-phosphate + L-serine = D-glyceraldehyde 3-phosphate + L-tryptophan + H2O. Its pathway is amino-acid biosynthesis; L-tryptophan biosynthesis; L-tryptophan from chorismate: step 5/5. Functionally, the alpha subunit is responsible for the aldol cleavage of indoleglycerol phosphate to indole and glyceraldehyde 3-phosphate. This is Tryptophan synthase alpha chain from Streptococcus mutans serotype c (strain ATCC 700610 / UA159).